The primary structure comprises 447 residues: Na(+)-translocating NADH-quinone reductase subunit A (447 aa).

This sequence belongs to the NqrA family. Composed of six subunits; NqrA, NqrB, NqrC, NqrD, NqrE and NqrF.

The enzyme catalyses a ubiquinone + n Na(+)(in) + NADH + H(+) = a ubiquinol + n Na(+)(out) + NAD(+). Functionally, NQR complex catalyzes the reduction of ubiquinone-1 to ubiquinol by two successive reactions, coupled with the transport of Na(+) ions from the cytoplasm to the periplasm. NqrA to NqrE are probably involved in the second step, the conversion of ubisemiquinone to ubiquinol. This Haemophilus influenzae (strain 86-028NP) protein is Na(+)-translocating NADH-quinone reductase subunit A.